The sequence spans 179 residues: Ribosome maturation factor RimM (179 aa).

Residues Glu103–Leu176 enclose the PRC barrel domain.

It belongs to the RimM family. As to quaternary structure, binds ribosomal protein uS19.

The protein resides in the cytoplasm. In terms of biological role, an accessory protein needed during the final step in the assembly of 30S ribosomal subunit, possibly for assembly of the head region. Essential for efficient processing of 16S rRNA. May be needed both before and after RbfA during the maturation of 16S rRNA. It has affinity for free ribosomal 30S subunits but not for 70S ribosomes. This Mycobacterium leprae (strain Br4923) protein is Ribosome maturation factor RimM.